The primary structure comprises 429 residues: Histidine--tRNA ligase (429 aa).

The protein belongs to the class-II aminoacyl-tRNA synthetase family. Homodimer.

The protein localises to the cytoplasm. It carries out the reaction tRNA(His) + L-histidine + ATP = L-histidyl-tRNA(His) + AMP + diphosphate + H(+). The chain is Histidine--tRNA ligase from Streptococcus pneumoniae (strain JJA).